The chain runs to 61 residues: Metallothionein-1 (61 aa).

Met1 carries the N-acetylmethionine modification. The segment at 1–29 is beta; the sequence is MDPNCSCPTGGSCTCAGSCKCKACRCPSC. Cys5, Cys7, Cys13, Cys15, Cys19, Cys21, Cys24, Cys26, Cys29, Cys33, Cys34, Cys36, Cys37, Cys41, Cys44, Cys48, Cys50, Cys57, Cys59, and Cys60 together coordinate a divalent metal cation. The alpha stretch occupies residues 30–61; that stretch reads KKSCCSCCPVGCAKCAQGCVCKGASDKCSCCA.

Belongs to the metallothionein superfamily. Type 1 family. Monomer.

Metallothioneins have a high content of cysteine residues that bind various heavy metals; these proteins are transcriptionally regulated by both heavy metals and glucocorticoids. This Bos taurus (Bovine) protein is Metallothionein-1 (MT1).